We begin with the raw amino-acid sequence, 575 residues long: MQQDDDFQNFVATLESFKDLKSGISGSRIKKLTTYALDHIDIESKIISLIIDYSRLCPDSHKLGSLYIIDSIGRAYLDETRSNSNSSSNKPGTCAHAINTLGEVIQELLSDAIAKSNQDHKEKIRMLLDIWDRSGLFQKSYLNAIRSKCFAMDISNNTANTASQQLSLDPKQRSKQILSNLKKSPPLNLNISLPTDLTSTDPAKQQAALFQVIAALQKHFKTLPSHTSVGTVAPPQAHTITEYGSRRERERERERYNSRRNRSRSPPAPFSQPSTGRKDRYPSVAQDQYSIGAPNTTFGTNNHHLYPDELNVSNNPHYRPKPVSYDSTLPPDHIKVYSRTLFIGGVPLNMKEWDLANVLKPFAEVQSVILNNSRKHAFVKVYSRHEAENVLQNFNKDGALPLRTRWGVGFGPRDCCDYQHGYSIIPMHRLTDADKKWSVSAQWGGTSGQPLVTGIVFEEPDIIVGEGVSSKAISQKMPTDSGRNGPRSGKPNKSGSISSISPVPYGNAPLASPPPQQYVQPMMQQPYGYAPNQPLPSQGPAAAAPPVPQQQFDPTAQLNSLMNMLNQQQQQQQQS.

Residues 1-153 (MQQDDDFQNF…AIRSKCFAMD (153 aa)) enclose the CID domain. The disordered stretch occupies residues 225–282 (SHTSVGTVAPPQAHTITEYGSRRERERERERYNSRRNRSRSPPAPFSQPSTGRKDRYP). The segment covering 244 to 257 (GSRRERERERERYN) has biased composition (basic and acidic residues). Phosphoserine occurs at positions 263, 265, and 271. In terms of domain architecture, RRM spans 339 to 409 (RTLFIGGVPL…LPLRTRWGVG (71 aa)). The segment at 468–575 (VSSKAISQKM…NQQQQQQQQS (108 aa)) is disordered. Polar residues-rich tracts occupy residues 471–482 (KAISQKMPTDSG) and 491–501 (PNKSGSISSIS). 2 stretches are compositionally biased toward low complexity: residues 517-527 (QYVQPMMQQPY) and 549-575 (QQQFDPTAQLNSLMNMLNQQQQQQQQS).

The protein localises to the nucleus. In terms of biological role, plays a role in sequence-specific regulation of nuclear pre-mRNA abundance. This chain is Protein NRD1 (NRD1), found in Saccharomyces cerevisiae (strain ATCC 204508 / S288c) (Baker's yeast).